The sequence spans 912 residues: MSSFRSHCPHLDSVGEITKEDLIQKSHGSCQDCKVRGPNLWACLENRCSYVGCGESQVDHSTIHSQETKHYLTVNLTTLRVWCYACSKEVFLDRKLGTQPSLPHVKPLHQIQENGVQDFKIPSNTTLKTPLVAVFDDLDIEVEEEDELKARGLTGLKNIGNTCYMNAALQALSNCPPLTQFFLDCGGLARTDKKPAICKSYLKLMTELWHKSRPGSVVPTTLFQGIKTVNPTFRGYSQQDAQEFLRCLMDLLHEELKEQVMEVEEDPQTIMTEETMEEDKSQSDVDFQSCESCSSSDKAENENGSRSFSEDNNETTMLIQDDENNSEMSKDWQKEKMCNKINKVHSEGELDKDRDSVSETADLNNQETVKVQIHSRASEYITDVHLNDLSTPQILPSNEGVNPRLSASPPKSGNLWPGLPPTHKKVQSALSPKRKKQHKKYRSVISDIFDGTIISSVQCLTCDRVSVTLETFQDLSLPIPGKEDLAKLHSSSHPTSIVKAGSCGEAYAPQGWIAFFMEYVKRFVVSCVPSWFWGPVVTLQDCLAAFFARDELKGDNMYSCEKCKKLRNGVKFCKVQKFPEILCIHLKRFRHELMFSTKISTHVSFPLEGLDLQPFLAKDSPVQIVTYDLLSVICHHGTASSGHYIAYCRNNLNNLWYEFDDQSVTEVSESTVQNAEAYVLFYRKSSEEAQKERRRISNLLNIMEPSLLQFYISRQWLNKFKTFAEPGPISNNDFLCIHGGVPPRKAGYIEDLVLMLPQNIWDNLYSRYGGGPAVNHLYICHTCQIEAEKIEKRRKTELEIFIRLNRAFQEEDSPATFYCISMQWFREWESFVKGKDGDPPGPIDNTKIAVTKCGNVILRQGADSGQISEETWNFLQSIYGGGPEVILRPPVVHVDPDAVQAEEKIEVETRSL.

Residues 6–109 (SHCPHLDSVG…PSLPHVKPLH (104 aa)) form a UBP-type zinc finger. Residues Cys-8, His-10, Cys-30, Cys-33, Cys-43, Cys-48, Cys-53, His-60, His-64, His-70, Cys-83, and Cys-86 each coordinate Zn(2+). One can recognise a USP domain in the interval 154–685 (TGLKNIGNTC…EAYVLFYRKS (532 aa)). Cys-163 functions as the Nucleophile in the catalytic mechanism. The segment at 274-334 (ETMEEDKSQS…NSEMSKDWQK (61 aa)) is disordered. Residues 284–296 (DVDFQSCESCSSS) are compositionally biased toward polar residues. A phosphoserine mark is found at Ser-346 and Ser-408. The disordered stretch occupies residues 403 to 433 (PRLSASPPKSGNLWPGLPPTHKKVQSALSPK). The segment covering 422–433 (THKKVQSALSPK) has biased composition (basic residues). The Proton acceptor role is filled by His-643. 2 consecutive DUSP domains span residues 687-780 (EEAQ…LYIC) and 788-891 (EKIE…RPPV).

Belongs to the peptidase C19 family. USP20/USP33 subfamily. In terms of assembly, interacts with VHL, leading to its ubiquitination and subsequent degradation. Interacts with ARRB1 and ARRB2. Interacts with ADRB2. Interacts with DIO2. Interacts with ROBO1. Interacts with SELENBP1; in a selenium-dependent manner. Interacts with CCP110. Ubiquitinated via a VHL-dependent pathway for proteasomal degradation.

It localises to the cytoplasm. The protein localises to the perinuclear region. The protein resides in the cytoskeleton. It is found in the microtubule organizing center. Its subcellular location is the centrosome. It carries out the reaction Thiol-dependent hydrolysis of ester, thioester, amide, peptide and isopeptide bonds formed by the C-terminal Gly of ubiquitin (a 76-residue protein attached to proteins as an intracellular targeting signal).. Its function is as follows. Deubiquitinating enzyme involved in various processes such as centrosome duplication, cellular migration and beta-2 adrenergic receptor/ADRB2 recycling. Involved in regulation of centrosome duplication by mediating deubiquitination of CCP110 in S and G2/M phase, leading to stabilize CCP110 during the period which centrioles duplicate and elongate. Involved in cell migration via its interaction with intracellular domain of ROBO1, leading to regulate the Slit signaling. Plays a role in commissural axon guidance cross the ventral midline of the neural tube in a Slit-dependent manner, possibly by mediating the deubiquitination of ROBO1. Acts as a regulator of G-protein coupled receptor (GPCR) signaling by mediating the deubiquitination of beta-arrestins (ARRB1 and ARRB2) and beta-2 adrenergic receptor (ADRB2). Plays a central role in ADRB2 recycling and resensitization after prolonged agonist stimulation by constitutively binding ADRB2, mediating deubiquitination of ADRB2 and inhibiting lysosomal trafficking of ADRB2. Upon dissociation, it is probably transferred to the translocated beta-arrestins, leading to beta-arrestins deubiquitination and disengagement from ADRB2. This suggests the existence of a dynamic exchange between the ADRB2 and beta-arrestins. Deubiquitinates DIO2, thereby regulating thyroid hormone regulation. Mediates deubiquitination of both 'Lys-48'- and 'Lys-63'-linked polyubiquitin chains. The polypeptide is Ubiquitin carboxyl-terminal hydrolase 33 (USP33) (Bos taurus (Bovine)).